The primary structure comprises 246 residues: DNA repair protein RecO (246 aa).

It belongs to the RecO family.

Functionally, involved in DNA repair and RecF pathway recombination. The sequence is that of DNA repair protein RecO from Methylorubrum extorquens (strain CM4 / NCIMB 13688) (Methylobacterium extorquens).